A 214-amino-acid chain; its full sequence is Thymidylate kinase (214 aa).

Residue Gly12 to Ser19 participates in ATP binding.

Belongs to the thymidylate kinase family.

It catalyses the reaction dTMP + ATP = dTDP + ADP. Functionally, phosphorylation of dTMP to form dTDP in both de novo and salvage pathways of dTTP synthesis. The protein is Thymidylate kinase of Bdellovibrio bacteriovorus (strain ATCC 15356 / DSM 50701 / NCIMB 9529 / HD100).